The primary structure comprises 977 residues: Synaptonemal complex protein 2-like (977 aa).

4 disordered regions span residues 447-474 (LGSQ…LSNA), 574-593 (QSTE…NSPL), 642-728 (RNKS…QDIM), and 804-824 (TEKN…VFYS). The span at 449–462 (SQTSEHSSTTKTSS) shows a compositional bias: low complexity. The segment covering 463–474 (ANRSVQKSLSNA) has biased composition (polar residues). Over residues 674–693 (SRKEMHRPEDINPKSPHSAE) the composition is skewed to basic and acidic residues.

The protein belongs to the SYCP2 family. Ubiquitinated and gradually degraded by the proteasome during oocyte maturation. In terms of processing, phosphorylated in maturing oocytes, before its degradation. In terms of tissue distribution, expressed in immature oocytes (at protein level). Expressed in the ovary.

The protein localises to the nucleus. Its subcellular location is the chromosome. The protein resides in the centromere. It is found in the nucleolus. In terms of biological role, oocyte-specific protein that localizes to centromeres at the dictyate stage and regulates the survival of primordial oocytes. This is Synaptonemal complex protein 2-like (sycp2l) from Xenopus laevis (African clawed frog).